A 199-amino-acid chain; its full sequence is Large ribosomal subunit protein uL18 (199 aa).

It belongs to the universal ribosomal protein uL18 family. Part of the 50S ribosomal subunit. Contacts the 5S and 23S rRNAs.

In terms of biological role, this is one of the proteins that bind and probably mediate the attachment of the 5S RNA into the large ribosomal subunit, where it forms part of the central protuberance. The sequence is that of Large ribosomal subunit protein uL18 from Saccharolobus solfataricus (strain ATCC 35092 / DSM 1617 / JCM 11322 / P2) (Sulfolobus solfataricus).